A 299-amino-acid polypeptide reads, in one-letter code: Recombination-associated protein RdgC (299 aa).

This sequence belongs to the RdgC family.

It is found in the cytoplasm. Its subcellular location is the nucleoid. Functionally, may be involved in recombination. The protein is Recombination-associated protein RdgC of Bordetella parapertussis (strain 12822 / ATCC BAA-587 / NCTC 13253).